A 390-amino-acid polypeptide reads, in one-letter code: Succinate--CoA ligase [ADP-forming] subunit beta (390 aa).

An ATP-grasp domain is found at 9-248; sequence KEILRRHKAN…ITEEDPLEVQ (240 aa). Residues K50, 57 to 59, E103, I106, and E111 contribute to the ATP site; that span reads GRG. Residues N203 and D217 each coordinate Mg(2+). Substrate contacts are provided by residues N268 and 325 to 327; that span reads GIV.

It belongs to the succinate/malate CoA ligase beta subunit family. In terms of assembly, heterotetramer of two alpha and two beta subunits. The cofactor is Mg(2+).

The catalysed reaction is succinate + ATP + CoA = succinyl-CoA + ADP + phosphate. It carries out the reaction GTP + succinate + CoA = succinyl-CoA + GDP + phosphate. It functions in the pathway carbohydrate metabolism; tricarboxylic acid cycle; succinate from succinyl-CoA (ligase route): step 1/1. Succinyl-CoA synthetase functions in the citric acid cycle (TCA), coupling the hydrolysis of succinyl-CoA to the synthesis of either ATP or GTP and thus represents the only step of substrate-level phosphorylation in the TCA. The beta subunit provides nucleotide specificity of the enzyme and binds the substrate succinate, while the binding sites for coenzyme A and phosphate are found in the alpha subunit. The sequence is that of Succinate--CoA ligase [ADP-forming] subunit beta from Leptospira interrogans serogroup Icterohaemorrhagiae serovar copenhageni (strain Fiocruz L1-130).